Here is a 129-residue protein sequence, read N- to C-terminus: Sulfurtransferase TusD (129 aa).

The Cysteine persulfide intermediate role is filled by cysteine 79.

This sequence belongs to the DsrE/TusD family. Heterohexamer, formed by a dimer of trimers. The hexameric TusBCD complex contains 2 copies each of TusB, TusC and TusD. The TusBCD complex interacts with TusE.

The protein resides in the cytoplasm. Part of a sulfur-relay system required for 2-thiolation of 5-methylaminomethyl-2-thiouridine (mnm(5)s(2)U) at tRNA wobble positions. Accepts sulfur from TusA and transfers it in turn to TusE. This Pectobacterium carotovorum subsp. carotovorum (strain PC1) protein is Sulfurtransferase TusD.